Consider the following 158-residue polypeptide: Transcription elongation factor GreA (158 aa).

The stretch at 49-73 (QAAREQQGFIEGRIKEIEAKLANAQ) forms a coiled coil.

The protein belongs to the GreA/GreB family.

In terms of biological role, necessary for efficient RNA polymerase transcription elongation past template-encoded arresting sites. The arresting sites in DNA have the property of trapping a certain fraction of elongating RNA polymerases that pass through, resulting in locked ternary complexes. Cleavage of the nascent transcript by cleavage factors such as GreA or GreB allows the resumption of elongation from the new 3'terminus. GreA releases sequences of 2 to 3 nucleotides. This is Transcription elongation factor GreA from Methylococcus capsulatus (strain ATCC 33009 / NCIMB 11132 / Bath).